The primary structure comprises 511 residues: MVEQIMIQGTASDAGKSILVAGLCRLFKNKGKRVVPFKSQNMSLNSFITATGDEMGRAQVFQAEAAGVFPDVRMNPVLLKPTNDRQSQVVFMGSILDNMDAVTYHDFKQTLISKIQAVYQSLADENDIIVLEGAGSPAEINLNDRDIVNMGMAKMVDAPVVLVADIDKGGVFASIYGTIMLLNEEESARIKGVIINKFRGDVALLQPGIDMIEELTKVPVIGVIPYANLKLEEEDSVSLSGKNYVPNSSALLDIAIICLPRISNFTDFHVLEIQPDISLRYIRNLAEFGNPDLVIIPGSKNTLEDMAFLEKSGLKKAIQHYAEKAGKVIGICGGYQMLGKKMLDPNQVESEQIEISGLGLLDTETIFLNQKRTTQITGVTLSGEPVEGYEIHMGQTKRGESTSPFCEIKAVNGNQETHQDGAVSTNKNIIGTYIHGIFDNDIFLGNLFNELLTLKNKTVYPHEIIQLKEHKEQEYDKLAALLEENIQMDQLEKIMKGEKICVSTQKPVIKE.

Residues 251-443 form the GATase cobBQ-type domain; sequence LLDIAIICLP…IHGIFDNDIF (193 aa). Cysteine 332 acts as the Nucleophile in catalysis. Residue histidine 435 is part of the active site.

This sequence belongs to the CobB/CobQ family. CobQ subfamily.

It functions in the pathway cofactor biosynthesis; adenosylcobalamin biosynthesis. Catalyzes amidations at positions B, D, E, and G on adenosylcobyrinic A,C-diamide. NH(2) groups are provided by glutamine, and one molecule of ATP is hydrogenolyzed for each amidation. This Listeria welshimeri serovar 6b (strain ATCC 35897 / DSM 20650 / CCUG 15529 / CIP 8149 / NCTC 11857 / SLCC 5334 / V8) protein is Cobyric acid synthase.